The primary structure comprises 176 residues: Adenine phosphoribosyltransferase (176 aa).

It belongs to the purine/pyrimidine phosphoribosyltransferase family. Homodimer.

The protein localises to the cytoplasm. The catalysed reaction is AMP + diphosphate = 5-phospho-alpha-D-ribose 1-diphosphate + adenine. The protein operates within purine metabolism; AMP biosynthesis via salvage pathway; AMP from adenine: step 1/1. Catalyzes a salvage reaction resulting in the formation of AMP, that is energically less costly than de novo synthesis. This is Adenine phosphoribosyltransferase from Methylobacillus flagellatus (strain ATCC 51484 / DSM 6875 / VKM B-1610 / KT).